The following is a 346-amino-acid chain: N-acetyl-gamma-glutamyl-phosphate reductase (346 aa).

The active site involves C149.

The protein belongs to the NAGSA dehydrogenase family. Type 1 subfamily.

The protein resides in the cytoplasm. The enzyme catalyses N-acetyl-L-glutamate 5-semialdehyde + phosphate + NADP(+) = N-acetyl-L-glutamyl 5-phosphate + NADPH + H(+). It functions in the pathway amino-acid biosynthesis; L-arginine biosynthesis; N(2)-acetyl-L-ornithine from L-glutamate: step 3/4. In terms of biological role, catalyzes the NADPH-dependent reduction of N-acetyl-5-glutamyl phosphate to yield N-acetyl-L-glutamate 5-semialdehyde. This is N-acetyl-gamma-glutamyl-phosphate reductase from Micrococcus luteus (strain ATCC 4698 / DSM 20030 / JCM 1464 / CCM 169 / CCUG 5858 / IAM 1056 / NBRC 3333 / NCIMB 9278 / NCTC 2665 / VKM Ac-2230) (Micrococcus lysodeikticus).